The following is a 251-amino-acid chain: Methylthioribulose-1-phosphate dehydratase (251 aa).

Residues 1-26 (MTSVCDATNEDKENGSESTESQDKEH) are disordered. Residues 9–26 (NEDKENGSESTESQDKEH) are compositionally biased toward basic and acidic residues. Cys100 contributes to the substrate binding site. Residues His118 and His120 each contribute to the Zn(2+) site. Glu142 serves as the catalytic Proton donor/acceptor. Position 198 (His198) interacts with Zn(2+). Positions 232–251 (MDPSAPPIEENHYYDVQQSQ) are disordered.

Belongs to the aldolase class II family. MtnB subfamily. Zn(2+) is required as a cofactor.

Its subcellular location is the cytoplasm. The enzyme catalyses 5-(methylsulfanyl)-D-ribulose 1-phosphate = 5-methylsulfanyl-2,3-dioxopentyl phosphate + H2O. Its pathway is amino-acid biosynthesis; L-methionine biosynthesis via salvage pathway; L-methionine from S-methyl-5-thio-alpha-D-ribose 1-phosphate: step 2/6. Functionally, catalyzes the dehydration of methylthioribulose-1-phosphate (MTRu-1-P) into 2,3-diketo-5-methylthiopentyl-1-phosphate (DK-MTP-1-P). Functions in the methionine salvage pathway. May play a role in apoptosis. This Salmo salar (Atlantic salmon) protein is Methylthioribulose-1-phosphate dehydratase.